A 309-amino-acid polypeptide reads, in one-letter code: Probable ABC transporter permease protein y4oQ (309 aa).

Helical transmembrane passes span 25-45, 89-109, 123-143, 174-194, 221-241, 246-266, and 278-298; these read VVWFTMPAAAIMLLVLGVPLV, LIYAVVAVSLECALGILFAVL, LMLIPMVITPAVVGIFWKLLY, VIIVDVWQSTPFFTLIILAGL, LPHLVPYIMIAAAFRIIGVMA, IFLLTLGGPGNVTTTLSVYAY, and TTAISWIYVVFVLAISAPLIW. In terms of domain architecture, ABC transmembrane type-1 spans 85–296; that stretch reads IRVTLIYAVV…VFVLAISAPL (212 aa).

It belongs to the binding-protein-dependent transport system permease family. MalFG subfamily.

Its subcellular location is the cell inner membrane. Probably part of the binding-protein-dependent transport system y4oPQRS. This system probably transports a sugar-like molecule. Probably responsible for the translocation of the substrate across the membrane. The polypeptide is Probable ABC transporter permease protein y4oQ (Sinorhizobium fredii (strain NBRC 101917 / NGR234)).